The primary structure comprises 225 residues: Ribonuclease 3 (225 aa).

One can recognise an RNase III domain in the interval 5-127; it reads VTELYKTIDY…IIGAVFLDSD (123 aa). Glutamate 40 contacts Mg(2+). Aspartate 44 is an active-site residue. 2 residues coordinate Mg(2+): aspartate 113 and glutamate 116. Residue glutamate 116 is part of the active site. One can recognise a DRBM domain in the interval 154–223; sequence DPKTLLQEHL…AEKALKILKN (70 aa).

The protein belongs to the ribonuclease III family. As to quaternary structure, homodimer. The cofactor is Mg(2+).

The protein localises to the cytoplasm. It carries out the reaction Endonucleolytic cleavage to 5'-phosphomonoester.. Digests double-stranded RNA. Involved in the processing of primary rRNA transcript to yield the immediate precursors to the large and small rRNAs (23S and 16S). Processes some mRNAs, and tRNAs when they are encoded in the rRNA operon. Processes pre-crRNA and tracrRNA of type II CRISPR loci if present in the organism. The protein is Ribonuclease 3 of Pseudoalteromonas translucida (strain TAC 125).